We begin with the raw amino-acid sequence, 424 residues long: MVNTTALIRSPTFVAQFRVLKQVNRGLFSQTSYARTHARTSYTHTMAGTDRLQQTSQILSRSTSSEIRLERPFKVTVIGSGNWGTTIAKVVAENTQEYPQLFERRVDMWVFEEQIEGRKLTEIINEQHENVKYLPGITLPENLVANPSVAAAAADADVLVFNIPHQFLGRIVEQLKGHVKPGARAISCLKGFSVGKDGVQLLSTYIEEHLHIPCGALSGANLAPEVAKGNWSETTVAYTLPQDFRGTGKDVDHAVLKKLFHRPYFHVNVVDDVAGISVAGALKNVVALACGFVLGLGWGNNAAAAVQRVGLSEMIKFARMFFPESKVETFYQESAGVADLITTCAGGRNVRIGRAMAETGKSAQELEKELLNGQSSQGIYTTQEVHEWLQQCGKKDEFPLFEAVYKIVYEGVPMSKLPDMLEDA.

NAD(+)-binding positions include 79–84 (GSGNWG), Phe-111, and Phe-167. Position 190 (Lys-190) interacts with substrate. Residue Ala-223 coordinates NAD(+). Catalysis depends on Lys-283, which acts as the Proton acceptor. Arg-348 and Gln-377 together coordinate NAD(+). 348 to 349 (RN) contacts substrate.

This sequence belongs to the NAD-dependent glycerol-3-phosphate dehydrogenase family.

The catalysed reaction is sn-glycerol 3-phosphate + NAD(+) = dihydroxyacetone phosphate + NADH + H(+). In Eremothecium gossypii (strain ATCC 10895 / CBS 109.51 / FGSC 9923 / NRRL Y-1056) (Yeast), this protein is Glycerol-3-phosphate dehydrogenase [NAD(+)] (GPD).